A 113-amino-acid chain; its full sequence is Hydrogenase maturation factor HypA (113 aa).

Residue histidine 2 participates in Ni(2+) binding. Positions 73, 76, 89, and 92 each coordinate Zn(2+).

The protein belongs to the HypA/HybF family.

Involved in the maturation of [NiFe] hydrogenases. Required for nickel insertion into the metal center of the hydrogenase. This chain is Hydrogenase maturation factor HypA, found in Rhodopseudomonas palustris (strain BisA53).